A 66-amino-acid chain; its full sequence is Large ribosomal subunit protein bL33c (66 aa).

The protein belongs to the bacterial ribosomal protein bL33 family.

The protein resides in the plastid. Its subcellular location is the chloroplast. The polypeptide is Large ribosomal subunit protein bL33c (Adiantum capillus-veneris (Maidenhair fern)).